The following is a 181-amino-acid chain: Shikimate kinase (181 aa).

17–22 (GAGKTT) provides a ligand contact to ATP. Threonine 21 contributes to the Mg(2+) binding site. Substrate contacts are provided by aspartate 39, arginine 63, and glycine 85. Arginine 122 lines the ATP pocket. Residue arginine 141 participates in substrate binding.

It belongs to the shikimate kinase family. As to quaternary structure, monomer. Mg(2+) serves as cofactor.

The protein localises to the cytoplasm. It carries out the reaction shikimate + ATP = 3-phosphoshikimate + ADP + H(+). The protein operates within metabolic intermediate biosynthesis; chorismate biosynthesis; chorismate from D-erythrose 4-phosphate and phosphoenolpyruvate: step 5/7. Catalyzes the specific phosphorylation of the 3-hydroxyl group of shikimic acid using ATP as a cosubstrate. This is Shikimate kinase from Nostoc sp. (strain PCC 7120 / SAG 25.82 / UTEX 2576).